Here is a 288-residue protein sequence, read N- to C-terminus: Transposase for insertion sequence element IS1106 (288 aa).

The protein belongs to the transposase 11 family.

In terms of biological role, involved in the transposition of the insertion sequence. The sequence is that of Transposase for insertion sequence element IS1106 from Neisseria meningitidis serogroup B.